The following is a 598-amino-acid chain: Elongation factor 4 (598 aa).

The tr-type G domain maps to 2–184 (KNIRNFSIIA…EIVHKIPAPE (183 aa)). GTP contacts are provided by residues 14–19 (DHGKST) and 131–134 (NKID).

The protein belongs to the TRAFAC class translation factor GTPase superfamily. Classic translation factor GTPase family. LepA subfamily.

It localises to the cell inner membrane. The enzyme catalyses GTP + H2O = GDP + phosphate + H(+). Functionally, required for accurate and efficient protein synthesis under certain stress conditions. May act as a fidelity factor of the translation reaction, by catalyzing a one-codon backward translocation of tRNAs on improperly translocated ribosomes. Back-translocation proceeds from a post-translocation (POST) complex to a pre-translocation (PRE) complex, thus giving elongation factor G a second chance to translocate the tRNAs correctly. Binds to ribosomes in a GTP-dependent manner. This chain is Elongation factor 4, found in Pasteurella multocida (strain Pm70).